The sequence spans 647 residues: LIM domain kinase 1 (647 aa).

LIM zinc-binding domains lie at 25 to 75 and 84 to 137; these read CASC…CKKD and CHGC…CGQC. The PDZ domain maps to 165-258; that stretch reads LVSIPASAHG…LLQLTLEHDP (94 aa). A Phosphoserine modification is found at Ser210. Thr229 bears the Phosphothreonine mark. The segment at 256–319 is disordered; sequence HDPHDSLGHG…SPASQRKDLG (64 aa). The span at 266 to 277 shows a compositional bias: low complexity; that stretch reads PVSDPSPLSSPV. Composition is skewed to polar residues over residues 278–289 and 298–313; these read HTPSGQAASSAR and SIDTSPGTSSLASPAS. A phosphoserine mark is found at Ser298, Ser302, Ser307, and Ser310. At Ser323 the chain carries Phosphoserine; by MAPKAPK2. Ser337 carries the post-translational modification Phosphoserine. A Protein kinase domain is found at 339–604; that stretch reads LIHGEVLGKG…PSFVKLEQWL (266 aa). ATP contacts are provided by residues 345–353 and Lys368; that span reads LGKGCFGQA. Asp460 is an active-site residue. Residue Thr508 is modified to Phosphothreonine; by ROCK1.

The protein belongs to the protein kinase superfamily. TKL Ser/Thr protein kinase family. Self-associates to form homodimers. Interacts with HSP90AA1; this interaction promotes LIMK1 dimerization and subsequent transphosphorylation. Interacts with CDKN1C. Interacts (via LIM domain) with the cytoplasmic domain of NRG1. Interacts with NISCH. Interacts with SSH1. Interacts with RLIM and RNF6. Interacts (via LIM zinc-binding domains) with FAM89B/LRAP25 (via LRR repeat). Forms a tripartite complex with CDC42BPA, CDC42BPB and FAM89B/LRAP25. Post-translationally, autophosphorylated. Phosphorylated on Thr-508 by ROCK1 and PAK1, resulting in activation. Phosphorylated by PAK4 which increases the ability of LIMK1 to phosphorylate cofilin. Phosphorylated at Ser-323 by MAPKAPK2 during activation of VEGFA-induced signaling, which results in activation of LIMK1 and promotion of actin reorganization, cell migration, and tubule formation of endothelial cells. Dephosphorylated and inactivated by SSH1. Phosphorylated by CDC42BP. Ubiquitinated. 'Lys-48'-linked polyubiquitination by RNF6 leads to proteasomal degradation through the 26S proteasome, modulating LIMK1 levels in the growth cone and its effect on axonal outgrowth. Also polyubiquitinated by RLIM. As to expression, highest expression in the nervous system, particularly in the spinal cord and the cranial nerve and dorsal root ganglia.

The protein resides in the cytoplasm. Its subcellular location is the nucleus. The protein localises to the cytoskeleton. It is found in the cell projection. It localises to the lamellipodium. It catalyses the reaction L-seryl-[protein] + ATP = O-phospho-L-seryl-[protein] + ADP + H(+). It carries out the reaction L-threonyl-[protein] + ATP = O-phospho-L-threonyl-[protein] + ADP + H(+). Functionally, serine/threonine-protein kinase that plays an essential role in the regulation of actin filament dynamics. Acts downstream of several Rho family GTPase signal transduction pathways. Activated by upstream kinases including ROCK1, PAK1 and PAK4, which phosphorylate LIMK1 on a threonine residue located in its activation loop. LIMK1 subsequently phosphorylates and inactivates the actin binding/depolymerizing factors cofilin-1/CFL1, cofilin-2/CFL2 and destrin/DSTN, thereby preventing the cleavage of filamentous actin (F-actin), and stabilizing the actin cytoskeleton. In this way LIMK1 regulates several actin-dependent biological processes including cell motility, cell cycle progression, and differentiation. Phosphorylates TPPP on serine residues, thereby promoting microtubule disassembly. Stimulates axonal outgrowth and may be involved in brain development. This is LIM domain kinase 1 (Limk1) from Mus musculus (Mouse).